A 206-amino-acid chain; its full sequence is Small ribosomal subunit protein uS4 (206 aa).

The S4 RNA-binding domain occupies 96 to 158 (GRLDNVVYRM…AKQQTRIKAA (63 aa)).

This sequence belongs to the universal ribosomal protein uS4 family. As to quaternary structure, part of the 30S ribosomal subunit. Contacts protein S5. The interaction surface between S4 and S5 is involved in control of translational fidelity.

Its function is as follows. One of the primary rRNA binding proteins, it binds directly to 16S rRNA where it nucleates assembly of the body of the 30S subunit. With S5 and S12 plays an important role in translational accuracy. The chain is Small ribosomal subunit protein uS4 from Vibrio vulnificus (strain CMCP6).